Reading from the N-terminus, the 189-residue chain is Apolipoprotein D (189 aa).

The signal sequence occupies residues 1 to 20 (MVPVLLLLPALAGLFGAAEG). A Pyrrolidone carboxylic acid modification is found at Gln-21. 2 disulfide bridges follow: Cys-28/Cys-134 and Cys-61/Cys-185. N-linked (GlcNAc...) asparagine glycans are attached at residues Asn-65 and Asn-98.

This sequence belongs to the calycin superfamily. Lipocalin family. In terms of assembly, homodimer.

Its subcellular location is the secreted. In terms of biological role, APOD occurs in the macromolecular complex with lecithin-transport and binding of bilin. Appears to be able to transport a variety of ligands in a number of different contexts. The protein is Apolipoprotein D (APOD) of Bos taurus (Bovine).